A 315-amino-acid chain; its full sequence is Large ribosomal subunit protein uL29m (315 aa).

It belongs to the universal ribosomal protein uL29 family. In terms of assembly, component of the mitochondrial large ribosomal subunit. Mature mitochondrial ribosomes consist of a small (37S) and a large (54S) subunit. The 37S subunit contains at least 33 different proteins and 1 molecule of RNA (15S). The 54S subunit contains at least 45 different proteins and 1 molecule of RNA (21S).

It is found in the mitochondrion. The protein is Large ribosomal subunit protein uL29m (MRPL4) of Candida glabrata (strain ATCC 2001 / BCRC 20586 / JCM 3761 / NBRC 0622 / NRRL Y-65 / CBS 138) (Yeast).